The primary structure comprises 467 residues: Retinoic acid receptor RXR-gamma (467 aa).

Positions 1–142 (MYGNYPHFIK…TSPGSLAKHI (142 aa)) are modulating. NR C4-type zinc fingers lie at residues 143–163 (CAIC…CEGC) and 179–203 (CRDN…YQKC). Positions 143-208 (CAICGDRSSG…RYQKCLAMGM (66 aa)) form a DNA-binding region, nuclear receptor. The hinge stretch occupies residues 209-232 (KREAVQEERQGSRERSENEAESTS). Basic and acidic residues predominate over residues 214-226 (QEERQGSRERSEN). The disordered stretch occupies residues 214-237 (QEERQGSRERSENEAESTSGGSED). Positions 235–463 (SEDMPVERIL…TFLMEMLETP (229 aa)) constitute an NR LBD domain.

It belongs to the nuclear hormone receptor family. NR2 subfamily. Homodimer. Heterodimer; with a RAR molecule. Binds DNA preferentially as a RAR/RXR heterodimer. As to expression, isoform 1 is highly expressed inliver. Isoform 2 is abundantly expressed in eye and dorsal root ganglia.

It is found in the nucleus. In terms of biological role, receptor for retinoic acid. Retinoic acid receptors bind as heterodimers to their target response elements in response to their ligands, all-trans or 9-cis retinoic acid, and regulate gene expression in various biological processes. The RAR/RXR heterodimers bind to the retinoic acid response elements (RARE) composed of tandem 5'-AGGTCA-3' sites known as DR1-DR5. The high affinity ligand for RXRs is 9-cis retinoic acid. The chain is Retinoic acid receptor RXR-gamma (RXRG) from Gallus gallus (Chicken).